The following is a 328-amino-acid chain: uncharacterized protein (328 aa).

A disordered region spans residues 1–22 (MPVKPNQPRPSTKQDPSSGASR). Over residues 9–21 (RPSTKQDPSSGAS) the composition is skewed to polar residues. Transmembrane regions (helical) follow at residues 66 to 86 (FSFLSLIPILMVSFATAGFVL), 126 to 146 (TVGLTGLLIALYSGVNWIGNL), 176 to 196 (FLSLIGLLLALVITLFLTSVA), 221 to 241 (LIALSISIFANYLLFLWILWV), 255 to 275 (GTLMAAIGFEALKFAMTVALP), and 290 to 310 (IGLMTFFYFFARLTLFCAAWI).

The protein to E.coli YhjD.

It localises to the cell inner membrane. This is an uncharacterized protein from Dickeya dadantii (strain 3937) (Erwinia chrysanthemi (strain 3937)).